A 196-amino-acid polypeptide reads, in one-letter code: Recombination protein RecR (196 aa).

Residues C57–C72 form a C4-type zinc finger. A Toprim domain is found at S80–P175.

The protein belongs to the RecR family.

May play a role in DNA repair. It seems to be involved in an RecBC-independent recombinational process of DNA repair. It may act with RecF and RecO. The protein is Recombination protein RecR of Albidiferax ferrireducens (strain ATCC BAA-621 / DSM 15236 / T118) (Rhodoferax ferrireducens).